Consider the following 645-residue polypeptide: Leucine-rich repeat protein soc-2 homolog (645 aa).

A compositionally biased stretch (low complexity) spans 1-19 (MNLCSSGATASTTSLSSTG). 2 disordered regions span residues 1 to 67 (MNLC…AGGS) and 83 to 151 (NSPA…IQAD). 2 stretches are compositionally biased toward gly residues: residues 26 to 49 (GVPG…GGGS) and 88 to 97 (GAGGASGSTG). The span at 98-107 (SGQQPTGSNG) shows a compositional bias: low complexity. LRR repeat units lie at residues 165–186 (GIKR…VKEC), 188–209 (HLTE…IGCL), 211–232 (SLRN…LQNC), 234–255 (QLKV…IYRL), 257–278 (SLTT…LRQL), 280–301 (NLTM…IGAL), 303–324 (NLTT…IGNC), 326–347 (NLSA…IGNL), 349–371 (SLVR…KNCK), 372–393 (SMDE…MLAS), 396–417 (GLTT…GPAQ), 420–441 (NVYS…IFSR), 444–465 (GLTK…IGTW), 467–488 (NMVE…IMNL), 490–511 (NLEI…IGNL), 513–534 (RLRI…IGLL), 536–557 (ELQR…IGHL), 559–580 (NLTH…IGSL), 582–604 (SLEN…LALC), and 606–627 (NLKY…IQAG).

Belongs to the SHOC2 family.

Its function is as follows. Acts as a Ras effector and participates in MAPK pathway activation. Probably acts as a regulatory subunit of protein phosphatase that specifically dephosphorylates Raf kinase and stimulate Raf activity at specialized signaling complexes upon Ras activation. The protein is Leucine-rich repeat protein soc-2 homolog (Sur-8) of Drosophila yakuba (Fruit fly).